Here is a 219-residue protein sequence, read N- to C-terminus: Vacuolar iron transporter homolog 2.1 (219 aa).

Over residues 1–15 (MTSNVQLSETNSPRN) the composition is skewed to polar residues. The segment at 1–26 (MTSNVQLSETNSPRNQKTRPRAEKEE) is disordered. An N-acetylthreonine modification is found at T2. Topologically, residues 2–37 (TSNVQLSETNSPRNQKTRPRAEKEEVDYMQRAQWLR) are cytoplasmic. Residues 38 to 58 (AALLGANDGLVTVASLMMGVG) form a helical membrane-spanning segment. Topologically, residues 59–67 (SIKEDVKAM) are vacuolar. The chain crosses the membrane as a helical span at residues 68–88 (LLVGFAGLVAGACSMAIGEFV). At 89–133 (SVCTQRDIETAQMKRAIEHKTSLSAIDEQEEEEKKERLPNPGQAA) the chain is on the cytoplasmic side. A helical transmembrane segment spans residues 134-154 (IASALAFSVGAAMPLLGAVFI). The Vacuolar segment spans residues 155-161 (ENHKVRM). Residues 162–182 (VVVAVVATIALVVFGVTGAVL) traverse the membrane as a helical segment. The Cytoplasmic segment spans residues 183-193 (GKTSVVKSSVR). Residues 194-214 (VVIGGWMAMALTFGLTKFIGS) traverse the membrane as a helical segment. The Vacuolar portion of the chain corresponds to 215 to 219 (AAMQI).

It belongs to the CCC1 family. In terms of tissue distribution, highly expressed in roots. inflorescences and at lower levels in leaves.

The protein localises to the vacuole membrane. It carries out the reaction Fe(2+)(in) = Fe(2+)(out). In terms of biological role, vacuolar iron transporter involved in the transfer of iron ions from the cytosol to the vacuole for intracellular iron storage. Involved in regulation of cellular iron homeostasis. Vacuolar iron storage is required for seed embryo and seedling development. This is Vacuolar iron transporter homolog 2.1 from Arabidopsis thaliana (Mouse-ear cress).